The following is a 250-amino-acid chain: Ubiquitin-conjugating enzyme E2 6 (250 aa).

The Cytoplasmic segment spans residues 1-232 (MATKQAHKRL…DGKEPNDSSS (232 aa)). The region spanning 5–167 (QAHKRLTKEY…VQENVETLEK (163 aa)) is the UBC core domain. Residue Cys-87 is the Glycyl thioester intermediate of the active site. Phosphoserine is present on Ser-139. At Thr-178 the chain carries Phosphothreonine. A disordered region spans residues 209-229 (AEQALRQSENNSKKDGKEPND). A compositionally biased stretch (basic and acidic residues) spans 219–228 (NSKKDGKEPN). A helical transmembrane segment spans residues 233–249 (MVYIGIAIFLFLVGLFM).

This sequence belongs to the ubiquitin-conjugating enzyme family.

The protein resides in the endoplasmic reticulum membrane. It carries out the reaction S-ubiquitinyl-[E1 ubiquitin-activating enzyme]-L-cysteine + [E2 ubiquitin-conjugating enzyme]-L-cysteine = [E1 ubiquitin-activating enzyme]-L-cysteine + S-ubiquitinyl-[E2 ubiquitin-conjugating enzyme]-L-cysteine.. Its pathway is protein modification; protein ubiquitination. Catalyzes the covalent attachment of ubiquitin to other proteins. Functions in degradation of misfolded or regulated proteins localized in the endoplasmic reticulum (ER) lumen or membrane via the ubiquitin-proteasome system. Cognate E2 conjugating enzyme for the DOA10 ubiquitin ligase complex, which is part of the ERAD-C pathway responsible for the rapid degradation of membrane proteins with misfolded cytoplasmic domains. This chain is Ubiquitin-conjugating enzyme E2 6 (UBC6), found in Saccharomyces cerevisiae (strain ATCC 204508 / S288c) (Baker's yeast).